The primary structure comprises 356 residues: Guanine nucleotide-binding protein alpha-2 subunit (356 aa).

Residue G2 is the site of N-myristoyl glycine attachment. C4 is lipidated: S-palmitoyl cysteine. The 325-residue stretch at 32–356 folds into the G-alpha domain; that stretch reads RTVKLLLLGA…QSNLHKSGLY (325 aa). The segment at 35–48 is G1 motif; sequence KLLLLGAGECGKST. GTP-binding residues include E43, G45, K46, S47, T48, D153, L178, T184, G206, N272, K273, D275, and A328. S47 contributes to the Mg(2+) binding site. The tract at residues 176 to 184 is G2 motif; that stretch reads DTLLLRTKT. Residue T184 participates in Mg(2+) binding. The G3 motif stretch occupies residues 199–208; sequence FRVFDVGGQR. A G4 motif region spans residues 268–275; sequence ILFLNKKD. The interval 326–331 is G5 motif; sequence TCATDT.

It belongs to the G-alpha family. G(q) subfamily. As to quaternary structure, g proteins are composed of 3 units; alpha, beta and gamma. The alpha chain contains the guanine nucleotide binding site. Mg(2+) serves as cofactor.

Its function is as follows. Guanine nucleotide-binding proteins (G proteins) are involved as modulators or transducers in various transmembrane signaling systems. Involved in behavioral responses to P.aeruginosa by controlling the expression of daf-7, a member of the TGF-beta family, in ASJ sensory neurons. The polypeptide is Guanine nucleotide-binding protein alpha-2 subunit (gpa-2) (Caenorhabditis elegans).